The following is a 332-amino-acid chain: Ribosomal RNA small subunit methyltransferase C (332 aa).

This sequence belongs to the methyltransferase superfamily. RsmC family. Monomer.

It is found in the cytoplasm. The enzyme catalyses guanosine(1207) in 16S rRNA + S-adenosyl-L-methionine = N(2)-methylguanosine(1207) in 16S rRNA + S-adenosyl-L-homocysteine + H(+). Specifically methylates the guanine in position 1207 of 16S rRNA in the 30S particle. This chain is Ribosomal RNA small subunit methyltransferase C, found in Pseudomonas entomophila (strain L48).